The chain runs to 73 residues: Large ribosomal subunit protein bL31 (73 aa).

C16, C18, C37, and C40 together coordinate Zn(2+).

Belongs to the bacterial ribosomal protein bL31 family. Type A subfamily. In terms of assembly, part of the 50S ribosomal subunit. Zn(2+) is required as a cofactor.

Its function is as follows. Binds the 23S rRNA. The chain is Large ribosomal subunit protein bL31 from Pseudomonas fluorescens (strain ATCC BAA-477 / NRRL B-23932 / Pf-5).